The primary structure comprises 279 residues: Probable endonuclease 4 (279 aa).

Zn(2+) is bound by residues His69, His109, Glu145, Asp179, His182, His216, Asp229, His231, and Glu261.

This sequence belongs to the AP endonuclease 2 family. Requires Zn(2+) as cofactor.

The catalysed reaction is Endonucleolytic cleavage to 5'-phosphooligonucleotide end-products.. Its function is as follows. Endonuclease IV plays a role in DNA repair. It cleaves phosphodiester bonds at apurinic or apyrimidinic (AP) sites, generating a 3'-hydroxyl group and a 5'-terminal sugar phosphate. This chain is Probable endonuclease 4, found in Tolumonas auensis (strain DSM 9187 / NBRC 110442 / TA 4).